The following is a 495-amino-acid chain: Glycogen synthase (495 aa).

Residue lysine 24 coordinates ADP-alpha-D-glucose.

Belongs to the glycosyltransferase 1 family. Bacterial/plant glycogen synthase subfamily.

It catalyses the reaction [(1-&gt;4)-alpha-D-glucosyl](n) + ADP-alpha-D-glucose = [(1-&gt;4)-alpha-D-glucosyl](n+1) + ADP + H(+). It participates in glycan biosynthesis; glycogen biosynthesis. Synthesizes alpha-1,4-glucan chains using ADP-glucose. In Nitrosomonas europaea (strain ATCC 19718 / CIP 103999 / KCTC 2705 / NBRC 14298), this protein is Glycogen synthase.